The primary structure comprises 427 residues: Enolase (427 aa).

Glutamine 163 contacts (2R)-2-phosphoglycerate. Glutamate 205 functions as the Proton donor in the catalytic mechanism. Aspartate 242, glutamate 285, and aspartate 312 together coordinate Mg(2+). Lysine 337, arginine 366, serine 367, and lysine 388 together coordinate (2R)-2-phosphoglycerate. The active-site Proton acceptor is the lysine 337.

It belongs to the enolase family. It depends on Mg(2+) as a cofactor.

Its subcellular location is the cytoplasm. It is found in the secreted. It localises to the cell surface. The enzyme catalyses (2R)-2-phosphoglycerate = phosphoenolpyruvate + H2O. The protein operates within carbohydrate degradation; glycolysis; pyruvate from D-glyceraldehyde 3-phosphate: step 4/5. Its function is as follows. Catalyzes the reversible conversion of 2-phosphoglycerate (2-PG) into phosphoenolpyruvate (PEP). It is essential for the degradation of carbohydrates via glycolysis. The protein is Enolase of Burkholderia mallei (strain NCTC 10247).